We begin with the raw amino-acid sequence, 763 residues long: Phosphoglycerol transferase I (763 aa).

4 helical membrane passes run 1–21 (MSEL…AWKA), 26–46 (WWFA…ITLF), 77–97 (ILPG…LGWI), and 108–128 (FGYS…SPAF).

This sequence belongs to the OpgB family.

It is found in the cell inner membrane. It catalyses the reaction a phosphatidylglycerol + a membrane-derived-oligosaccharide D-glucose = a 1,2-diacyl-sn-glycerol + a membrane-derived-oligosaccharide 6-(glycerophospho)-D-glucose.. Its pathway is glycan metabolism; osmoregulated periplasmic glucan (OPG) biosynthesis. Transfers a phosphoglycerol residue from phosphatidylglycerol to the membrane-bound nascent glucan backbones. In Escherichia coli O45:K1 (strain S88 / ExPEC), this protein is Phosphoglycerol transferase I.